A 400-amino-acid chain; its full sequence is ASTRA-associated protein 1 (400 aa).

WD repeat units follow at residues 6-54 (SAPQ…PKLQ), 57-94 (AHKD…FEMP), 240-272 (EYQN…KVVI), and 273-312 (HSDP…KGEI).

It belongs to the WD repeat ASA1 family. As to quaternary structure, component of the ASTRA chromatin remodeling machinery complex.

The protein resides in the nucleus. Its function is as follows. Component of the ASTRA complex involved in chromatin remodeling. This Lodderomyces elongisporus (strain ATCC 11503 / CBS 2605 / JCM 1781 / NBRC 1676 / NRRL YB-4239) (Yeast) protein is ASTRA-associated protein 1 (ASA1).